A 66-amino-acid polypeptide reads, in one-letter code: Opicalcin-1 (66 aa).

Positions 1–22 are cleaved as a signal peptide; sequence MKPSLIIVTFIVVFMAISCVAA. The propeptide occupies 23–31; that stretch reads DDEQETWIE. 3 disulfides stabilise this stretch: Cys-36–Cys-50, Cys-43–Cys-54, and Cys-49–Cys-65. Residues 55–57 form an essential for stimulation of [3H]ryanodine binding to RYR1 region; it reads KRR.

This sequence belongs to the scorpion calcin family. In terms of tissue distribution, expressed by the venom gland.

It is found in the secreted. This toxin stabilizes ryanodine receptor 1 (RyR1) opening in a long-lasting subconductance state (35% of the full conductance state). Furthermore, it triggers calcium release from sarcoplasmic vesicles (2 nM are enough to induce a sharp release, and 67% of the total calcium is released after toxin (100 nM) addition) probably by acting as a cell-penetrating peptide (CPP). In addition, it has been shown to dose-dependently stimulate ryanodine binding to RyR1 (EC(50)=0.3 nM). It also augments the bell-shaped calcium-[3H]ryanodine binding curve that is maximal at about 10 uM calcium concentration. It binds a different site as ryanodine. It acts synergistically with caffeine. In vivo, intracerebroventricular injection into mice induces neurotoxic symptoms, followed by death. In Opistophthalmus carinatus (African yellow leg scorpion), this protein is Opicalcin-1.